The sequence spans 164 residues: UPF0114 protein YqhA (164 aa).

3 helical membrane-spanning segments follow: residues 15 to 35 (LLAP…LKFF), 53 to 73 (LILV…LVMV), and 136 to 156 (LMWY…MGYL).

Belongs to the UPF0114 family.

The protein resides in the cell membrane. The protein is UPF0114 protein YqhA of Escherichia coli O6:H1 (strain CFT073 / ATCC 700928 / UPEC).